Consider the following 436-residue polypeptide: Histidine--tRNA ligase (436 aa).

This sequence belongs to the class-II aminoacyl-tRNA synthetase family. In terms of assembly, homodimer.

Its subcellular location is the cytoplasm. It catalyses the reaction tRNA(His) + L-histidine + ATP = L-histidyl-tRNA(His) + AMP + diphosphate + H(+). The sequence is that of Histidine--tRNA ligase from Prochlorococcus marinus (strain MIT 9313).